A 207-amino-acid polypeptide reads, in one-letter code: MKLIGLLIVAYLLGAIPNGVWVGKAFFQTDIRQAGSGNIGTTNTYRVLGPYAGTIVMVLDIAKGSVATLLPIVFHVQTVLGTATPLLFGLFAVLGHTVSIFDHFKGGKAVATSAGMLLAYNPIMFVIAAGFWVSLIYWTSIVSLASMIAFTLITLISLVFQDWYLTGIALVLTVFVFYRHRSNIQRIRQGTESMVPFGRGYHRRQAK.

5 consecutive transmembrane segments (helical) span residues 3-23 (LIGL…VWVG), 54-74 (TIVM…PIVF), 81-101 (GTAT…VSIF), 122-142 (PIMF…TSIV), and 158-178 (LVFQ…FVFY).

This sequence belongs to the PlsY family. In terms of assembly, probably interacts with PlsX.

It is found in the cell membrane. It carries out the reaction an acyl phosphate + sn-glycerol 3-phosphate = a 1-acyl-sn-glycero-3-phosphate + phosphate. It participates in lipid metabolism; phospholipid metabolism. In terms of biological role, catalyzes the transfer of an acyl group from acyl-phosphate (acyl-PO(4)) to glycerol-3-phosphate (G3P) to form lysophosphatidic acid (LPA). This enzyme utilizes acyl-phosphate as fatty acyl donor, but not acyl-CoA or acyl-ACP. This Levilactobacillus brevis (strain ATCC 367 / BCRC 12310 / CIP 105137 / JCM 1170 / LMG 11437 / NCIMB 947 / NCTC 947) (Lactobacillus brevis) protein is Glycerol-3-phosphate acyltransferase.